A 659-amino-acid chain; its full sequence is Fructose-1,6-bisphosphatase class 3 (659 aa).

It belongs to the FBPase class 3 family. The cofactor is Mn(2+).

It catalyses the reaction beta-D-fructose 1,6-bisphosphate + H2O = beta-D-fructose 6-phosphate + phosphate. It participates in carbohydrate biosynthesis; gluconeogenesis. The polypeptide is Fructose-1,6-bisphosphatase class 3 (Clostridium botulinum (strain Alaska E43 / Type E3)).